The chain runs to 265 residues: Short-chain dehydrogenase/reductase fsr5 (265 aa).

A signal peptide spans 1–32 (MASLGKYVSKLAGSRVLVIGGSSGIGFGVAEA). Serine 22, serine 23, isoleucine 25, serine 45, and lysine 50 together coordinate NADP(+). N-linked (GlcNAc...) asparagine glycosylation occurs at asparagine 62. NADP(+) is bound by residues asparagine 88, arginine 130, and threonine 204. N-linked (GlcNAc...) asparagine glycans are attached at residues asparagine 218 and asparagine 250.

Belongs to the short-chain dehydrogenases/reductases (SDR) family.

In terms of biological role, short-chain dehydrogenase/reductase; part of the gene cluster that mediates the biosynthesis of fusarubins, highly pigmented naphthoquinones responsible for the coloration of the fruiting bodies. The non-reducing polyketide synthase FSR1 is responsible for the condensation of seven acetyl-CoA units to yield a haptaketide. After rings A and B are formed by aldol-type cyclization, the PKS-derived product is released as 6-O-demethylfusarubinaldehyde. Then, two hydroxyl groups at C-5 and C-10 are incorporated by FSR3, and simultaneously hydroxyl groups at C-6 and C-8 are methylated by FSR2. The aldehyde is, on the one hand, reduced by FSR3 to 8-O-methylfusarubin alcohol, which equilibrates mainly with 8-O-methylfusarubin and only small amounts of 8-O-methylnectriafurone. On the other hand, the aldehyde can be oxidized to form 8-O-methylfusarubinic acid, a reaction driven by FSR3 equilibrating with 8-O-methylfusarubinlactone, finally resulting in 8-O-methylanhydrofusarubinlactol after a further reduction step and loss of water. 8-O-Methylfusarubinic acid can also undergo decarboxylation, resulting in 8-O-methyl-13-hydroxynorjavanicin after another hydroxylation step at C-13. Both steps are most likely also accomplished by FSR3. No enzymatic function has been determined so far for either FSR4 and FSR5. Their deletion does not alter the product spectrum, but the possibility that they catalyze specific enzymatic steps during perithecium development cannot be ruled out. FSR4 might possess a regulatory function in the biosynthesis of fusarubins. In Gibberella fujikuroi (strain CBS 195.34 / IMI 58289 / NRRL A-6831) (Bakanae and foot rot disease fungus), this protein is Short-chain dehydrogenase/reductase fsr5.